Reading from the N-terminus, the 941-residue chain is RNA-binding protein 4F (941 aa).

The segment covering 1–13 (MDADKQLERQLEK) has biased composition (basic and acidic residues). The segment at 1–149 (MDADKQLERQ…DSDNAGGGNQ (149 aa)) is disordered. A compositionally biased stretch (acidic residues) spans 14–32 (ELDEMPAEDLDDDAYDEYD). Over residues 42 to 52 (GSPQQGHSESP) the composition is skewed to polar residues. S43 is modified (phosphoserine). Residues 55 to 65 (EEEHKSEELRQ) show a composition bias toward basic and acidic residues. Positions 87–98 (SSDDEPSVEETE) are enriched in acidic residues. The segment covering 111 to 134 (DSSSSSDDVGVIEGSELESNSEVS) has biased composition (low complexity). A Phosphoserine modification is found at S153. The interval 629 to 713 (RSRIKPNSQS…GPANAEAKES (85 aa)) is disordered. A compositionally biased stretch (low complexity) spans 671–680 (EQQQQQQQQQ). A Phosphoserine modification is found at S713. Y717 carries the phosphotyrosine modification. Position 718 is a phosphoserine (S718). Residues 724–801 (NKIFVRNLHP…MNISVAISNP (78 aa)) enclose the RRM domain. Basic and acidic residues-rich tracts occupy residues 862 to 902 (EANG…KGDD), 913 to 922 (QKGDEKKEEE), and 930 to 941 (SNDDFRKLFLKD). The tract at residues 862–941 (EANGEEQKGD…DDFRKLFLKD (80 aa)) is disordered.

It is found in the cytoplasm. Its function is as follows. May be involved in gene regulation during development. Binds RNA. This chain is RNA-binding protein 4F, found in Drosophila melanogaster (Fruit fly).